We begin with the raw amino-acid sequence, 120 residues long: Photosystem II extrinsic protein U (120 aa).

Positions 1-29 (MKRLLSLLTGVLVMTGLLMALIFPQSAYA) are cleaved as a signal peptide.

This sequence belongs to the PsbU family. PSII is composed of 1 copy each of membrane proteins PsbA, PsbB, PsbC, PsbD, PsbE, PsbF, PsbH, PsbI, PsbJ, PsbK, PsbL, PsbM, PsbT, PsbX, PsbY, Psb30/Ycf12, peripheral proteins PsbO, CyanoQ (PsbQ), PsbU, PsbV and a large number of cofactors. It forms dimeric complexes.

The protein localises to the cellular thylakoid membrane. In terms of biological role, one of the extrinsic, lumenal subunits of photosystem II (PSII). PSII is a light-driven water plastoquinone oxidoreductase, using light energy to abstract electrons from H(2)O, generating a proton gradient subsequently used for ATP formation. The extrinsic proteins stabilize the structure of photosystem II oxygen-evolving complex (OEC), the ion environment of oxygen evolution and protect the OEC against heat-induced inactivation. The polypeptide is Photosystem II extrinsic protein U (Prochlorococcus marinus (strain MIT 9303)).